Reading from the N-terminus, the 64-residue chain is Cytochrome c oxidase subunit 2 (64 aa).

Residues 1 to 14 (MAHPSQLGFQDAAS) lie on the Mitochondrial intermembrane side of the membrane. Residues 15-45 (PMMEELLHFHDHALMVVFLISTFVLYIILTM) traverse the membrane as a helical segment. The Mitochondrial matrix portion of the chain corresponds to 46 to 64 (LTTKLTDKLILESHEIEII).

Belongs to the cytochrome c oxidase subunit 2 family. In terms of assembly, component of the cytochrome c oxidase (complex IV, CIV), a multisubunit enzyme composed of 14 subunits. The complex is composed of a catalytic core of 3 subunits MT-CO1, MT-CO2 and MT-CO3, encoded in the mitochondrial DNA, and 11 supernumerary subunits COX4I, COX5A, COX5B, COX6A, COX6B, COX6C, COX7A, COX7B, COX7C, COX8 and NDUFA4, which are encoded in the nuclear genome. The complex exists as a monomer or a dimer and forms supercomplexes (SCs) in the inner mitochondrial membrane with NADH-ubiquinone oxidoreductase (complex I, CI) and ubiquinol-cytochrome c oxidoreductase (cytochrome b-c1 complex, complex III, CIII), resulting in different assemblies (supercomplex SCI(1)III(2)IV(1) and megacomplex MCI(2)III(2)IV(2)). Found in a complex with TMEM177, COA6, COX18, COX20, SCO1 and SCO2. Interacts with TMEM177 in a COX20-dependent manner. Interacts with COX20. Interacts with COX16. It depends on Cu cation as a cofactor.

It is found in the mitochondrion inner membrane. It catalyses the reaction 4 Fe(II)-[cytochrome c] + O2 + 8 H(+)(in) = 4 Fe(III)-[cytochrome c] + 2 H2O + 4 H(+)(out). Its function is as follows. Component of the cytochrome c oxidase, the last enzyme in the mitochondrial electron transport chain which drives oxidative phosphorylation. The respiratory chain contains 3 multisubunit complexes succinate dehydrogenase (complex II, CII), ubiquinol-cytochrome c oxidoreductase (cytochrome b-c1 complex, complex III, CIII) and cytochrome c oxidase (complex IV, CIV), that cooperate to transfer electrons derived from NADH and succinate to molecular oxygen, creating an electrochemical gradient over the inner membrane that drives transmembrane transport and the ATP synthase. Cytochrome c oxidase is the component of the respiratory chain that catalyzes the reduction of oxygen to water. Electrons originating from reduced cytochrome c in the intermembrane space (IMS) are transferred via the dinuclear copper A center (CU(A)) of subunit 2 and heme A of subunit 1 to the active site in subunit 1, a binuclear center (BNC) formed by heme A3 and copper B (CU(B)). The BNC reduces molecular oxygen to 2 water molecules using 4 electrons from cytochrome c in the IMS and 4 protons from the mitochondrial matrix. The chain is Cytochrome c oxidase subunit 2 (mt-co2) from Geophagus steindachneri (Red hump earth eater).